The primary structure comprises 221 residues: Urease accessory protein UreG (221 aa).

19 to 26 (GPVGSGKT) provides a ligand contact to GTP.

Belongs to the SIMIBI class G3E GTPase family. UreG subfamily. Homodimer. UreD, UreF and UreG form a complex that acts as a GTP-hydrolysis-dependent molecular chaperone, activating the urease apoprotein by helping to assemble the nickel containing metallocenter of UreC. The UreE protein probably delivers the nickel.

It localises to the cytoplasm. Functionally, facilitates the functional incorporation of the urease nickel metallocenter. This process requires GTP hydrolysis, probably effectuated by UreG. Its function is as follows. Expression of the urease operon increases the likelihood of bacterial survival by contributing to acid resistance in vitro and in vivo in BALB/c mice. Y.enterocolitica enters the body via an oral path and must survive the acidic stomach before being able to colonize the intestinal mucosa. The chain is Urease accessory protein UreG from Yersinia enterocolitica.